A 626-amino-acid polypeptide reads, in one-letter code: Dual specificity testis-specific protein kinase 1 (626 aa).

Residues 1–41 (MAGERPPLRGPGPGPGEVPGEGPPGPGGTGGGPGRGRPSSY) are disordered. Over residues 8–26 (LRGPGPGPGEVPGEGPPGP) the composition is skewed to pro residues. Positions 57–314 (FHCAEKIGAG…TEITQHLEWI (258 aa)) constitute a Protein kinase domain. ATP contacts are provided by residues 63–71 (IGAGFFSEV) and Lys86. The active-site Proton acceptor is the Asp175. Residue Ser220 is modified to Phosphoserine; by autocatalysis. Disordered regions lie at residues 331–373 (HNQG…NWGD), 423–488 (ETLV…QLPL), and 529–564 (WAGE…EPDE). The residue at position 338 (Arg338) is an Omega-N-methylarginine. Over residues 348–357 (PDPRLSRSRS) the composition is skewed to basic and acidic residues. The segment at 419 to 524 (VTTPETLVQP…NNNPPAVVVN (106 aa)) is required for interaction with YWHAB. Positions 476 to 485 (EPEPPGPAPQ) are enriched in pro residues. The interval 527-624 (QGWAGEPWNR…PTPSLQLPGA (98 aa)) is required for interaction with PARVA. The interval 527–626 (QGWAGEPWNR…PSLQLPGARS (100 aa)) is required for interaction with SPRED1 and SPRY2. Required for TESK1-mediated dephosphorylation of SPRY2 and SPRY2 inhibition of ERK phosphorylation.

This sequence belongs to the protein kinase superfamily. TKL Ser/Thr protein kinase family. Interacts (via both C- and N-termini) with SPRY4 (via C-terminus); the interaction inhibits TESK1 kinase activity. Interacts with TAOK1; the interaction inhibits TAOK1 kinase activity. Interacts (via C-terminus) with SPRED1 (via C-terminus); the interaction inhibits TESK1 kinase activity. Interacts (via C-terminus) with PARVA/PARVIN (via C-terminus); the interaction inhibits TESK1 kinase activity. Interacts with YWHAB/14-3-3 beta; the interaction is dependent on the phosphorylation of TESK1 Ser-437 and inhibits TESK1 kinase activity. Interacts with SPRY1, SPRY3 and SPRED2. Interacts (via C-terminus) with SPRY2 (via C-terminus); the interaction disrupts SPRY2 interaction with PPP2CA/PP2A-C, possibly by vesicular sequestration of SPRY2. Therefore dephosphorylation of SPRY2 by the serine/threonine-protein phosphatase 2A (PP2A) holoenzyme is lost, inhibiting its interaction with GRB2. Mg(2+) serves as cofactor. It depends on Mn(2+) as a cofactor. In terms of processing, autophosphorylated on serine and tyrosine residues. As to expression, expressed in podocytes and renal tubular cells in the kidney (at protein level).

It localises to the cytoplasm. Its subcellular location is the perinuclear region. The protein resides in the cytoskeleton. It is found in the microtubule organizing center. The protein localises to the centrosome. It localises to the cell projection. Its subcellular location is the lamellipodium. The enzyme catalyses L-seryl-[protein] + ATP = O-phospho-L-seryl-[protein] + ADP + H(+). It carries out the reaction L-threonyl-[protein] + ATP = O-phospho-L-threonyl-[protein] + ADP + H(+). The catalysed reaction is L-tyrosyl-[protein] + ATP = O-phospho-L-tyrosyl-[protein] + ADP + H(+). Activated by autophosphorylation on Ser-220. Kinase activity is inhibited by SPRED1. Its function is as follows. Dual specificity protein kinase activity catalyzing autophosphorylation and phosphorylation of exogenous substrates on both serine/threonine and tyrosine residues. Regulates the cellular cytoskeleton by enhancing actin stress fiber formation via phosphorylation of cofilin and by preventing microtubule breakdown via inhibition of TAOK1/MARKK kinase activity. Inhibits podocyte motility via regulation of actin cytoskeletal dynamics and phosphorylation of CFL1. Positively regulates integrin-mediated cell spreading, via phosphorylation of cofilin. Suppresses ciliogenesis via multiple pathways; phosphorylation of CFL1, suppression of ciliary vesicle directional trafficking to the ciliary base, and by facilitating YAP1 nuclear localization where it acts as a transcriptional corepressor of the TEAD4 target genes AURKA and PLK1. Probably plays a central role at and after the meiotic phase of spermatogenesis. The sequence is that of Dual specificity testis-specific protein kinase 1 (TESK1) from Homo sapiens (Human).